Here is a 504-residue protein sequence, read N- to C-terminus: Glycerol kinase (504 aa).

Thr16 provides a ligand contact to ADP. The ATP site is built by Thr16 and Thr17. Thr16 provides a ligand contact to sn-glycerol 3-phosphate. Arg20 is an ADP binding site. 4 residues coordinate sn-glycerol 3-phosphate: Arg86, Glu87, Tyr138, and Asp247. Arg86, Glu87, Tyr138, Asp247, and Gln248 together coordinate glycerol. Positions 269 and 316 each coordinate ADP. Residues Thr269, Gly316, Gln320, and Gly417 each coordinate ATP. ADP-binding residues include Gly417 and Asn421.

The protein belongs to the FGGY kinase family.

It catalyses the reaction glycerol + ATP = sn-glycerol 3-phosphate + ADP + H(+). It participates in polyol metabolism; glycerol degradation via glycerol kinase pathway; sn-glycerol 3-phosphate from glycerol: step 1/1. Inhibited by fructose 1,6-bisphosphate (FBP). Its function is as follows. Key enzyme in the regulation of glycerol uptake and metabolism. Catalyzes the phosphorylation of glycerol to yield sn-glycerol 3-phosphate. The sequence is that of Glycerol kinase from Trichodesmium erythraeum (strain IMS101).